Reading from the N-terminus, the 503-residue chain is TGF-beta receptor type-1 (503 aa).

An N-terminal signal peptide occupies residues 1–33 (MEAAVAAPRPRLLLLVLAAAAAAAAALLPGATA). Residues 34–126 (LQCFCHLCTK…SSPGLGPVEL (93 aa)) are Extracellular-facing. 5 disulfide bridges follow: C36/C54, C38/C41, C48/C71, C86/C100, and C101/C106. N45 is a glycosylation site (N-linked (GlcNAc...) asparagine). The helical transmembrane segment at 127–147 (AAVIAGPVCFVCISLMLMVYI) threads the bilayer. The Cytoplasmic portion of the chain corresponds to 148-503 (CHNRTVIHHR…QLSQQEGIKM (356 aa)). Residue S165 is modified to Phosphoserine. Positions 175-204 (TTLKDLIYDMTTSGSGSGLPLLVQRTIART) constitute a GS domain. T185 and T186 each carry phosphothreonine; by TGFBR2. Phosphoserine; by TGFBR2 occurs at positions 187, 189, and 191. The FKBP1A-binding motif lies at 193 to 194 (LP). The 291-residue stretch at 205–495 (IVLQESIGKG…LRIKKTLSQL (291 aa)) folds into the Protein kinase domain. ATP is bound by residues 211–219 (IGKGRFGEV) and K232. K268 is covalently cross-linked (Glycyl lysine isopeptide (Lys-Gly) (interchain with G-Cter in ubiquitin)). D333 functions as the Proton acceptor in the catalytic mechanism. Residue K391 forms a Glycyl lysine isopeptide (Lys-Gly) (interchain with G-Cter in SUMO) linkage.

Belongs to the protein kinase superfamily. TKL Ser/Thr protein kinase family. TGFB receptor subfamily. Homodimer; in the endoplasmic reticulum but also at the cell membrane. Heterohexamer; TGFB1, TGFB2 and TGFB3 homodimeric ligands assemble a functional receptor composed of two TGFBR1 and TGFBR2 heterodimers to form a ligand-receptor heterohexamer. The respective affinity of TGBRB1 and TGFBR2 for the ligands may modulate the kinetics of assembly of the receptor and may explain the different biological activities of TGFB1, TGFB2 and TGFB3. Component of a complex composed of TSC22D1 (via N-terminus), TGFBR1 and TGFBR2; the interaction between TSC22D1 and TGFBR1 is inhibited by SMAD7 and promoted by TGFB1. Interacts with CD109; inhibits TGF-beta receptor activation in keratinocytes. Interacts with RBPMS. Interacts (unphosphorylated) with FKBP1A; prevents TGFBR1 phosphorylation by TGFBR2 and stabilizes it in the inactive conformation. Interacts with SMAD2, SMAD3 and ZFYVE9; ZFYVE9 recruits SMAD2 and SMAD3 to the TGF-beta receptor. Interacts with TRAF6 and MAP3K7; induces MAP3K7 activation by TRAF6. Interacts with PARD6A; involved in TGF-beta induced epithelial to mesenchymal transition. Interacts with NEDD4L. Interacts with SMAD7, SMURF1 and SMURF2; SMAD7 recruits NEDD4L, SMURF1 and SMURF2 to the TGF-beta receptor. Interacts with USP15 and VPS39. Interacts with SDCBP (via C-terminus). Interacts with CAV1 and this interaction is impaired in the presence of SDCBP. Interacts with APPL1; interaction is TGF beta dependent; mediates trafficking of the TGFBR1 from the endosomes to the nucleus via microtubules in a TRAF6-dependent manner. Interacts with GPR50; this interaction promotes the constitutive activation of SMAD signaling pathway. The cofactor is Mg(2+). It depends on Mn(2+) as a cofactor. Phosphorylated at basal levels in the absence of ligand. Activated upon phosphorylation by TGFBR2, mainly in the GS domain. Phosphorylation in the GS domain abrogates FKBP1A-binding. Post-translationally, N-Glycosylated. In terms of processing, ubiquitinated; undergoes ubiquitination catalyzed by several E3 ubiquitin ligases including SMURF1, SMURF2 and NEDD4L2. Results in the proteasomal and/or lysosomal degradation of the receptor thereby negatively regulating its activity. Deubiquitinated by USP15, leading to stabilization of the protein and enhanced TGF-beta signal. Its ubiquitination and proteasome-mediated degradation is negatively regulated by SDCBP. Ubiquitinated by BFAR via'Lys-63'-linked ubiquitination at Lys-268, leading to TGF-beta signaling activation. As to expression, found in all tissues examined, most abundant in placenta and least abundant in brain and heart. Expressed in a variety of cancer cell lines.

Its subcellular location is the cell membrane. It is found in the cell junction. It localises to the tight junction. The protein localises to the cell surface. The protein resides in the membrane raft. The catalysed reaction is L-threonyl-[receptor-protein] + ATP = O-phospho-L-threonyl-[receptor-protein] + ADP + H(+). The enzyme catalyses L-seryl-[receptor-protein] + ATP = O-phospho-L-seryl-[receptor-protein] + ADP + H(+). Kept in an inactive conformation by FKBP1A preventing receptor activation in absence of ligand. CD109 is another inhibitor of the receptor. Transmembrane serine/threonine kinase forming with the TGF-beta type II serine/threonine kinase receptor, TGFBR2, the non-promiscuous receptor for the TGF-beta cytokines TGFB1, TGFB2 and TGFB3. Transduces the TGFB1, TGFB2 and TGFB3 signal from the cell surface to the cytoplasm and is thus regulating a plethora of physiological and pathological processes including cell cycle arrest in epithelial and hematopoietic cells, control of mesenchymal cell proliferation and differentiation, wound healing, extracellular matrix production, immunosuppression and carcinogenesis. The formation of the receptor complex composed of 2 TGFBR1 and 2 TGFBR2 molecules symmetrically bound to the cytokine dimer results in the phosphorylation and the activation of TGFBR1 by the constitutively active TGFBR2. Activated TGFBR1 phosphorylates SMAD2 which dissociates from the receptor and interacts with SMAD4. The SMAD2-SMAD4 complex is subsequently translocated to the nucleus where it modulates the transcription of the TGF-beta-regulated genes. This constitutes the canonical SMAD-dependent TGF-beta signaling cascade. Also involved in non-canonical, SMAD-independent TGF-beta signaling pathways. For instance, TGFBR1 induces TRAF6 autoubiquitination which in turn results in MAP3K7 ubiquitination and activation to trigger apoptosis. Also regulates epithelial to mesenchymal transition through a SMAD-independent signaling pathway through PARD6A phosphorylation and activation. This chain is TGF-beta receptor type-1 (TGFBR1), found in Homo sapiens (Human).